We begin with the raw amino-acid sequence, 700 residues long: Centrosomal protein of 63 kDa (700 aa).

Position 1 is an N-acetylmethionine (Met1). Coiled coils occupy residues 73–283 (KEVG…ETFI) and 343–533 (LQAE…MCKK). 3 positions are modified to phosphoserine: Ser278, Lys488, and Leu492. Residues 570–603 (QYKTGHHSPRGQTLDSIDPVARGPSPLSSHISPG) form a disordered region. The span at 593 to 603 (PSPLSSHISPG) shows a compositional bias: low complexity.

This sequence belongs to the CEP63 family. In terms of assembly, interacts with CEP152 and CDK1; these interactions recruit both ligands to centrosomes. Interacts with CDK2, CDK5RAP2, WDR62, CEP90, KIAA0753/moonraker and CCDC14. CEP63, CDK5RAP2, CEP152, WDR62 are proposed to form a stepwise assembled complex at the centrosome forming a ring near parental centrioles. Interacts with CCDC57; the interaction is required for their location to proximal end of centrioles. Interacts with FXR1; promoting its stabilization. Post-translationally, polyubiquitinated via 'Lys-48'-linked ubiquitin, leading to its degradation. Deubiquitinated by USP36, promoting its stabilization.

It is found in the cytoplasm. The protein resides in the cytoskeleton. Its subcellular location is the microtubule organizing center. The protein localises to the centrosome. It localises to the centriole. It is found in the centriolar satellite. Required for normal spindle assembly. Plays a key role in mother-centriole-dependent centriole duplication; the function also seems to involve CEP152, CDK5RAP2 and WDR62 through a stepwise assembled complex at the centrosome that recruits CDK2 required for centriole duplication. Reported to be required for centrosomal recruitment of CEP152; however, this function has been questioned. Also recruits CDK1 to centrosomes. Plays a role in DNA damage response. Following DNA damage, such as double-strand breaks (DSBs), is removed from centrosomes; this leads to the inactivation of spindle assembly and delay in mitotic progression. Promotes stabilization of FXR1 protein by inhibiting FXR1 ubiquitination. This Mus musculus (Mouse) protein is Centrosomal protein of 63 kDa.